Here is a 567-residue protein sequence, read N- to C-terminus: Hydrogenase-2 large chain (567 aa).

Cys61, Cys64, Cys546, and Cys549 together coordinate Ni(2+). Residues 553–567 (VVDADGNEVVSVKVL) constitute a propeptide that is removed on maturation.

Belongs to the [NiFe]/[NiFeSe] hydrogenase large subunit family. In terms of assembly, heterodimer of a large and a small subunit. The cofactor is Ni(2+).

The protein resides in the cell membrane. The enzyme catalyses H2 + A = AH2. In terms of biological role, this is one of three E.coli hydrogenases synthesized in response to different physiological conditions. HYD2 is involved in hydrogen uptake. The protein is Hydrogenase-2 large chain (hybC) of Escherichia coli O157:H7.